Consider the following 513-residue polypeptide: GMP synthase [glutamine-hydrolyzing] (513 aa).

Residues 8–198 (KIIVLDYGSQ…ALNICGAKGN (191 aa)) enclose the Glutamine amidotransferase type-1 domain. Cysteine 85 acts as the Nucleophile in catalysis. Residues histidine 172 and glutamate 174 contribute to the active site. The GMPS ATP-PPase domain maps to 199 to 388 (WSMENFIDMQ…LGMPDEIVWR (190 aa)). An ATP-binding site is contributed by 226 to 232 (SGGVDSS).

As to quaternary structure, homodimer.

The enzyme catalyses XMP + L-glutamine + ATP + H2O = GMP + L-glutamate + AMP + diphosphate + 2 H(+). It functions in the pathway purine metabolism; GMP biosynthesis; GMP from XMP (L-Gln route): step 1/1. Catalyzes the synthesis of GMP from XMP. This chain is GMP synthase [glutamine-hydrolyzing] (guaA), found in Lactococcus lactis subsp. lactis (strain IL1403) (Streptococcus lactis).